Here is a 437-residue protein sequence, read N- to C-terminus: tRNA-2-methylthio-N(6)-dimethylallyladenosine synthase (437 aa).

Residues 1-115 (MKVYIETMGC…ISQVIHKEKA (115 aa)) form the MTTase N-terminal domain. 6 residues coordinate [4Fe-4S] cluster: Cys-10, Cys-46, Cys-78, Cys-148, Cys-152, and Cys-155. The 234-residue stretch at 134–367 (KKAQIRSLLN…QNRHKEILEE (234 aa)) folds into the Radical SAM core domain. The TRAM domain maps to 370-436 (KLEVGKTHVV…KGRLIAAIKG (67 aa)).

This sequence belongs to the methylthiotransferase family. MiaB subfamily. As to quaternary structure, monomer. Requires [4Fe-4S] cluster as cofactor.

It localises to the cytoplasm. It catalyses the reaction N(6)-dimethylallyladenosine(37) in tRNA + (sulfur carrier)-SH + AH2 + 2 S-adenosyl-L-methionine = 2-methylsulfanyl-N(6)-dimethylallyladenosine(37) in tRNA + (sulfur carrier)-H + 5'-deoxyadenosine + L-methionine + A + S-adenosyl-L-homocysteine + 2 H(+). Catalyzes the methylthiolation of N6-(dimethylallyl)adenosine (i(6)A), leading to the formation of 2-methylthio-N6-(dimethylallyl)adenosine (ms(2)i(6)A) at position 37 in tRNAs that read codons beginning with uridine. In Helicobacter pylori (strain HPAG1), this protein is tRNA-2-methylthio-N(6)-dimethylallyladenosine synthase.